We begin with the raw amino-acid sequence, 162 residues long: MSSFTHFNEQGRAKMVDITHKEDTVRVAVAQTSVTVSREIYEKMTSNAIEKGDVLAVAQVAGVMAAKKTADLIPMCHPLMLKGVDIAFAWENDGEAHKLVITATVKTKGSTGVEMEALTAASVCALTVYDMCKALDKGMVIGPTYLVEKTGGKSGHYRRKTD.

Residues 75–77 (MCH) and 115–116 (ME) each bind substrate. The active site involves Asp-130.

Belongs to the MoaC family. As to quaternary structure, homohexamer; trimer of dimers.

It carries out the reaction (8S)-3',8-cyclo-7,8-dihydroguanosine 5'-triphosphate = cyclic pyranopterin phosphate + diphosphate. It participates in cofactor biosynthesis; molybdopterin biosynthesis. In terms of biological role, catalyzes the conversion of (8S)-3',8-cyclo-7,8-dihydroguanosine 5'-triphosphate to cyclic pyranopterin monophosphate (cPMP). The protein is Cyclic pyranopterin monophosphate synthase of Geobacillus kaustophilus (strain HTA426).